The sequence spans 460 residues: Argininosuccinate lyase (460 aa).

It belongs to the lyase 1 family. Argininosuccinate lyase subfamily.

It is found in the cytoplasm. It catalyses the reaction 2-(N(omega)-L-arginino)succinate = fumarate + L-arginine. The protein operates within amino-acid biosynthesis; L-arginine biosynthesis; L-arginine from L-ornithine and carbamoyl phosphate: step 3/3. The chain is Argininosuccinate lyase from Leuconostoc mesenteroides subsp. mesenteroides (strain ATCC 8293 / DSM 20343 / BCRC 11652 / CCM 1803 / JCM 6124 / NCDO 523 / NBRC 100496 / NCIMB 8023 / NCTC 12954 / NRRL B-1118 / 37Y).